We begin with the raw amino-acid sequence, 228 residues long: Cytochrome c oxidase subunit 2 (228 aa).

Residues 1 to 26 are Mitochondrial intermembrane-facing; it reads MSTWANLGLQDSASPLMEQLIFFHDH. A helical transmembrane segment spans residues 27-48; sequence ALLILVMITVLVGYLMFMLFFN. Residues 49–62 lie on the Mitochondrial matrix side of the membrane; it reads NYVNRFLLHGQLIE. The chain crosses the membrane as a helical span at residues 63 to 82; the sequence is MIWTILPAIILLFIALPSLR. At 83–228 the chain is on the mitochondrial intermembrane side; it reads LLYLLDEINE…FIKWISSNNS (146 aa). His161, Cys196, Glu198, Cys200, His204, and Met207 together coordinate Cu cation. Residue Glu198 coordinates Mg(2+).

It belongs to the cytochrome c oxidase subunit 2 family. Component of the cytochrome c oxidase (complex IV, CIV), a multisubunit enzyme composed of a catalytic core of 3 subunits and several supernumerary subunits. The complex exists as a monomer or a dimer and forms supercomplexes (SCs) in the inner mitochondrial membrane with ubiquinol-cytochrome c oxidoreductase (cytochrome b-c1 complex, complex III, CIII). Cu cation is required as a cofactor.

The protein localises to the mitochondrion inner membrane. It carries out the reaction 4 Fe(II)-[cytochrome c] + O2 + 8 H(+)(in) = 4 Fe(III)-[cytochrome c] + 2 H2O + 4 H(+)(out). Functionally, component of the cytochrome c oxidase, the last enzyme in the mitochondrial electron transport chain which drives oxidative phosphorylation. The respiratory chain contains 3 multisubunit complexes succinate dehydrogenase (complex II, CII), ubiquinol-cytochrome c oxidoreductase (cytochrome b-c1 complex, complex III, CIII) and cytochrome c oxidase (complex IV, CIV), that cooperate to transfer electrons derived from NADH and succinate to molecular oxygen, creating an electrochemical gradient over the inner membrane that drives transmembrane transport and the ATP synthase. Cytochrome c oxidase is the component of the respiratory chain that catalyzes the reduction of oxygen to water. Electrons originating from reduced cytochrome c in the intermembrane space (IMS) are transferred via the dinuclear copper A center (CU(A)) of subunit 2 and heme A of subunit 1 to the active site in subunit 1, a binuclear center (BNC) formed by heme A3 and copper B (CU(B)). The BNC reduces molecular oxygen to 2 water molecules using 4 electrons from cytochrome c in the IMS and 4 protons from the mitochondrial matrix. The chain is Cytochrome c oxidase subunit 2 (mt:CoII) from Drosophila yakuba (Fruit fly).